We begin with the raw amino-acid sequence, 25 residues long: Ocellatin-L2 (25 aa).

The residue at position 25 (Leu25) is a Leucine amide.

Belongs to the frog skin active peptide (FSAP) family. Ocellatin subfamily. In terms of tissue distribution, expressed by the skin glands.

Its subcellular location is the secreted. Functionally, shows a low activity in stimulating insulin release from rat BRIN-BD11 beta cells, and acts without loss of integrity of the plasma membrane. Does not show antibacterial (E.coli and S.aureus). Does not show hemolytic activity against human erythrocytes. The chain is Ocellatin-L2 from Leptodactylus laticeps (Santa Fe frog).